The sequence spans 246 residues: Type III pantothenate kinase (246 aa).

Residue 11-18 (DIGNSFIK) participates in ATP binding. Residues tyrosine 95 and 102 to 105 (GVDR) contribute to the substrate site. Aspartate 104 (proton acceptor) is an active-site residue. A K(+)-binding site is contributed by aspartate 125. Threonine 128 contacts ATP. Residue threonine 179 coordinates substrate.

Belongs to the type III pantothenate kinase family. Homodimer. It depends on NH4(+) as a cofactor. K(+) serves as cofactor.

The protein localises to the cytoplasm. The catalysed reaction is (R)-pantothenate + ATP = (R)-4'-phosphopantothenate + ADP + H(+). Its pathway is cofactor biosynthesis; coenzyme A biosynthesis; CoA from (R)-pantothenate: step 1/5. Its function is as follows. Catalyzes the phosphorylation of pantothenate (Pan), the first step in CoA biosynthesis. The sequence is that of Type III pantothenate kinase from Pseudoalteromonas atlantica (strain T6c / ATCC BAA-1087).